The primary structure comprises 336 residues: Formimidoylglutamase (336 aa).

The segment covering 1 to 10 (MNPNFTTEHT) has biased composition (polar residues). Residues 1 to 22 (MNPNFTTEHTWQGRHDPEDGQA) form a disordered region. Over residues 11-22 (WQGRHDPEDGQA) the composition is skewed to basic and acidic residues. The Mn(2+) site is built by His127, Asp157, His159, Asp161, Asp254, and Asp256.

It belongs to the arginase family. Requires Mn(2+) as cofactor.

It catalyses the reaction N-formimidoyl-L-glutamate + H2O = formamide + L-glutamate. Its pathway is amino-acid degradation; L-histidine degradation into L-glutamate; L-glutamate from N-formimidoyl-L-glutamate (hydrolase route): step 1/1. Its function is as follows. Catalyzes the conversion of N-formimidoyl-L-glutamate to L-glutamate and formamide. The chain is Formimidoylglutamase from Vibrio cholerae serotype O1 (strain ATCC 39541 / Classical Ogawa 395 / O395).